The chain runs to 139 residues: Maximins 4/H3 type 7 (139 aa).

The signal sequence occupies residues 1-18; that stretch reads MNFKYIVAVSFLIASAYA. A propeptide spanning residues 19 to 43 is cleaved from the precursor; it reads RSVQNDEQSLSQRDVLEEESLREIR. At Asn70 the chain carries Asparagine amide. Positions 74–118 are excised as a propeptide; the sequence is TAEDHEVMKRLEAIMRDLDSLDYPEEASERETRGFNQDEIAKEKR. Isoleucine amide is present on Ile138.

It belongs to the bombinin family. As to expression, expressed by the skin glands.

It is found in the secreted. Functionally, maximin-4 shows antibacterial activity against both Gram-positive and Gram-negative bacteria. It also shows antimicrobial activity against the fungus C.albicans, but not against A.flavus nor P.uticale. It has little hemolytic activity. It does not possess a significant cytotoxicity against tumor cell lines. It does not possess a significant anti-HIV activity. Maximin-H3 shows antibacterial activity against both Gram-positive and Gram-negative bacteria. It also shows antimicrobial activity against the fungus C.albicans. Shows strong hemolytic activity. The protein is Maximins 4/H3 type 7 of Bombina maxima (Giant fire-bellied toad).